Consider the following 88-residue polypeptide: Small ribosomal subunit protein uS15 (88 aa).

Belongs to the universal ribosomal protein uS15 family. Part of the 30S ribosomal subunit. Forms a bridge to the 50S subunit in the 70S ribosome, contacting the 23S rRNA.

Functionally, one of the primary rRNA binding proteins, it binds directly to 16S rRNA where it helps nucleate assembly of the platform of the 30S subunit by binding and bridging several RNA helices of the 16S rRNA. In terms of biological role, forms an intersubunit bridge (bridge B4) with the 23S rRNA of the 50S subunit in the ribosome. The polypeptide is Small ribosomal subunit protein uS15 (Geobacter metallireducens (strain ATCC 53774 / DSM 7210 / GS-15)).